Consider the following 131-residue polypeptide: DNA-directed RNA polymerase subunit omega (131 aa).

This sequence belongs to the RNA polymerase subunit omega family. The RNAP catalytic core consists of 2 alpha, 1 beta, 1 beta' and 1 omega subunit. When a sigma factor is associated with the core the holoenzyme is formed, which can initiate transcription.

It catalyses the reaction RNA(n) + a ribonucleoside 5'-triphosphate = RNA(n+1) + diphosphate. Promotes RNA polymerase assembly. Latches the N- and C-terminal regions of the beta' subunit thereby facilitating its interaction with the beta and alpha subunits. In Chelativorans sp. (strain BNC1), this protein is DNA-directed RNA polymerase subunit omega.